The chain runs to 372 residues: ATP-sensitive inward rectifier potassium channel 1 (372 aa).

Residues 1-58 lie on the Cytoplasmic side of the membrane; sequence MFKHLRRWFVTHIFGRSRQRARLVSKDGRCNIEFGNVDAQSRFIFFVDIWTTVLDLKW. Residue Ser25 is modified to Phosphoserine; by SGK1. Residues 59-83 traverse the membrane as a helical segment; that stretch reads RYKMTVFITAFLGSWFLFGLLWYVV. Over 84–108 the chain is Extracellular; it reads AYVHKDLPEFYPPDNRTPCVENING. Asn98 carries an N-linked (GlcNAc...) asparagine glycan. Positions 109–120 form an intramembrane region, helical; Pore-forming; sequence MTSAFLFSLETQ. An intramembrane region (pore-forming) is located at residues 121–127; it reads VTIGYGF. The Selectivity filter signature appears at 122 to 127; that stretch reads TIGYGF. The Extracellular segment spans residues 128-136; it reads RFVTEQCAT. A helical transmembrane segment spans residues 137-158; that stretch reads AIFLLIFQSILGVIINSFMCGA. The Cytoplasmic segment spans residues 159–372; that stretch reads ILAKISRPKK…EVDETDDTQM (214 aa). The interval 161 to 188 is polyphosphoinositide (PIP2)-binding; the sequence is AKISRPKKRAKTITFSKNAVISKRGGKL. Position 204–211 (204–211) interacts with ATP; the sequence is GSHIYGKL.

It belongs to the inward rectifier-type potassium channel (TC 1.A.2.1) family. KCNJ1 subfamily. As to quaternary structure, interacts with SGK1 and SLC9A3R2/NHERF2. Post-translationally, phosphorylation at Ser-25 by SGK1 is necessary for its expression at the cell membrane.

The protein localises to the cell membrane. It catalyses the reaction K(+)(in) = K(+)(out). Inhibited by WNK3. Activated by phosphatidylinositol 4,5 biphosphate (PtdIns(4,5)P2). Inward rectifier potassium channels are characterized by a greater tendency to allow potassium to flow into the cell rather than out of it. Their voltage dependence is regulated by the concentration of extracellular potassium; as external potassium is raised, the voltage range of the channel opening shifts to more positive voltages. The inward rectification is mainly due to the blockage of outward current by internal magnesium. This channel is activated by internal ATP and can be blocked by external barium. In the kidney, probably plays a major role in potassium homeostasis. This Mus musculus (Mouse) protein is ATP-sensitive inward rectifier potassium channel 1 (Kcnj1).